Consider the following 37-residue polypeptide: Large ribosomal subunit protein bL36 (37 aa).

It belongs to the bacterial ribosomal protein bL36 family.

The protein is Large ribosomal subunit protein bL36 of Acidovorax ebreus (strain TPSY) (Diaphorobacter sp. (strain TPSY)).